Here is a 69-residue protein sequence, read N- to C-terminus: uncharacterized protein (69 aa).

A run of 2 helical transmembrane segments spans residues 15–35 and 36–56; these read LIIG…ICYV and LYII…IPKT.

Its subcellular location is the cell membrane. This is an uncharacterized protein from Methanocaldococcus jannaschii (strain ATCC 43067 / DSM 2661 / JAL-1 / JCM 10045 / NBRC 100440) (Methanococcus jannaschii).